A 213-amino-acid chain; its full sequence is 3-isopropylmalate dehydratase small subunit (213 aa).

This sequence belongs to the LeuD family. LeuD type 1 subfamily. Heterodimer of LeuC and LeuD.

The enzyme catalyses (2R,3S)-3-isopropylmalate = (2S)-2-isopropylmalate. Its pathway is amino-acid biosynthesis; L-leucine biosynthesis; L-leucine from 3-methyl-2-oxobutanoate: step 2/4. Functionally, catalyzes the isomerization between 2-isopropylmalate and 3-isopropylmalate, via the formation of 2-isopropylmaleate. This chain is 3-isopropylmalate dehydratase small subunit, found in Neisseria meningitidis serogroup C / serotype 2a (strain ATCC 700532 / DSM 15464 / FAM18).